A 756-amino-acid chain; its full sequence is 5-methyltetrahydropteroyltriglutamate--homocysteine methyltransferase (756 aa).

Residues 15-18 and Lys111 each bind 5-methyltetrahydropteroyltri-L-glutamate; that span reads REWK. Residues 392 to 411 form a disordered region; it reads GAATSHNLENKKRPQSFNER. The span at 399–411 shows a compositional bias: basic and acidic residues; it reads LENKKRPQSFNER. L-homocysteine is bound by residues 429–431 and Glu482; that span reads IGS. Residues 429 to 431 and Glu482 contribute to the L-methionine site; that span reads IGS. 5-methyltetrahydropteroyltri-L-glutamate contacts are provided by residues 513-514 and Trp559; that span reads RC. Asp597 is an L-homocysteine binding site. Residue Asp597 participates in L-methionine binding. Glu603 provides a ligand contact to 5-methyltetrahydropteroyltri-L-glutamate. Zn(2+) contacts are provided by His639, Cys641, and Glu663. Catalysis depends on His692, which acts as the Proton donor. Cys724 serves as a coordination point for Zn(2+).

This sequence belongs to the vitamin-B12 independent methionine synthase family. The cofactor is Zn(2+).

The enzyme catalyses 5-methyltetrahydropteroyltri-L-glutamate + L-homocysteine = tetrahydropteroyltri-L-glutamate + L-methionine. It participates in amino-acid biosynthesis; L-methionine biosynthesis via de novo pathway; L-methionine from L-homocysteine (MetE route): step 1/1. Catalyzes the transfer of a methyl group from 5-methyltetrahydrofolate to homocysteine resulting in methionine formation. The chain is 5-methyltetrahydropteroyltriglutamate--homocysteine methyltransferase from Halalkalibacterium halodurans (strain ATCC BAA-125 / DSM 18197 / FERM 7344 / JCM 9153 / C-125) (Bacillus halodurans).